We begin with the raw amino-acid sequence, 113 residues long: Small ribosomal subunit protein bS6 (113 aa).

This sequence belongs to the bacterial ribosomal protein bS6 family.

Functionally, binds together with bS18 to 16S ribosomal RNA. This Buchnera aphidicola subsp. Schizaphis graminum (strain Sg) protein is Small ribosomal subunit protein bS6.